We begin with the raw amino-acid sequence, 428 residues long: Glutamate--tRNA ligase 2 (428 aa).

The short motif at proline 6 to glutamine 16 is the 'HIGH' region element.

Belongs to the class-I aminoacyl-tRNA synthetase family. Glutamate--tRNA ligase type 1 subfamily. As to quaternary structure, monomer.

It localises to the cytoplasm. It catalyses the reaction tRNA(Glu) + L-glutamate + ATP = L-glutamyl-tRNA(Glu) + AMP + diphosphate. Functionally, catalyzes the attachment of glutamate to tRNA(Glu) in a two-step reaction: glutamate is first activated by ATP to form Glu-AMP and then transferred to the acceptor end of tRNA(Glu). In Sulfurovum sp. (strain NBC37-1), this protein is Glutamate--tRNA ligase 2.